The primary structure comprises 220 residues: Deep-sea actinoporin Cjtox I (220 aa).

The first 19 residues, 1–19 (MNRLIILCLVAATIYSTIA), serve as a signal peptide directing secretion. The propeptide occupies 20 to 42 (LPMKEDISNEERPTSVNEKPVKK). 7 residues coordinate phosphocholine: serine 96, valine 128, serine 146, proline 148, tyrosine 174, tyrosine 178, and tyrosine 179. The trp-rich region, which is important for the binding to lipid membrane stretch occupies residues 146 to 161 (SVPYDYNWYSNWWNIK). The Cell attachment site, crucial for protein stability motif lies at 185-187 (KGN).

It belongs to the actinoporin family. Sea anemone subfamily. In terms of assembly, octamer or nonamer in membranes. Monomer in the soluble state. In terms of tissue distribution, expressed in tentacles.

Its subcellular location is the secreted. It localises to the nematocyst. The protein resides in the target cell membrane. Probably acts in predation. Pore-forming protein that forms cations-selective hydrophilic pores of around 1 nm and causes cytolysis. Pore formation is a multi-step process that involves specific recognition of membrane sphingomyelin (but neither cholesterol nor phosphatidylcholine) using aromatic rich region and adjacent phosphocholine (POC) binding site, firm binding to the membrane (mainly driven by hydrophobic interactions) accompanied by the transfer of the N-terminal region to the lipid-water interface and finally pore formation after oligomerization of monomers. Shows hemolytic activity on equine erythrocytes. Hemolysis is moderately inhibited in presence of sphingomyelin, suggesting that this protein targets sphingomyelin. This chain is Deep-sea actinoporin Cjtox I, found in Cribrinopsis japonica (Deep-sea anemone).